A 730-amino-acid polypeptide reads, in one-letter code: MSSVTWAPGNYPSTRRSDHVDTYQSASKGEVPVPDPYQWLEESTDEVDKWTTAQADLAQSYLDQNADIQKLAEKFRASRNYAKFSAPTLLDDGHWYWFYNRGLQSQSVLYRSKEPALPDFSKGDDNVGDVFFDPNVLAADGSAGMVLCKFSPDGKFFAYAVSHLGGDYSTIYVRSTSSPLSQASVAQGVDGRLSDEVKWFKFSTIIWTKDSKGFLYQRYPARERHEGTRSDRNAMMCYHKVGTTQEEDIIVYQDNEHPEWIYGADTSEDGKYLYLYQFKDTSKKNLLWVAELDEDGVKSGIHWRKVVNEYAADYNIITNHGSLVYIKTNLNAPQYKVITIDLSKDEPEIRDFIPEEKDAKLAQVNCANEEYFVAIYKRNVKDEIYLYSKAGVQLTRLAPDFVGAASIANRQKQTHFFLTLSGFNTPGTIARYDFTAPETQRFSILRTTKVNELDPDDFESTQVWYESKDGTKIPMFIVRHKSTKFDGTAAAIQYGYGGFATSADPFFSPIILTFLQTYGAIFAVPSIRGGGEFGEEWHKGGRRETKVNTFDDFIAAAQFLVKNKYAAPGKVAINGASNGGLLVMGSIVRAPEGTFGAAVPEGGVADLLKFHKFTGGQAWISEYGNPSIPEEFDYIYPLSPVHNVRTDKVMPATLITVNIGDGRVVPMHSFKFIATLQHNVPQNPHPLLIKIDKSWLGHGMGKPTDKNVKDAADKWGFIARALGLELKTVE.

The disordered stretch occupies residues 1-34 (MSSVTWAPGNYPSTRRSDHVDTYQSASKGEVPVP). Catalysis depends on charge relay system residues Ser577, Asp661, and His698.

It belongs to the peptidase S9A family. As to quaternary structure, monomer.

It carries out the reaction Hydrolysis of Pro-|-Xaa &gt;&gt; Ala-|-Xaa in oligopeptides.. Dual function macrocyclase-peptidase involved in the biosynthesis of the highly toxic amanitin toxin family of macrocycles. Cleaves peptide bonds on the C-terminal side of prolyl residues. The enzyme first removes 10 residues from the N-terminus of a 35-residue substrate. Conformational trapping of the 25 amino-acid peptide forces the enzyme to release this intermediate rather than proceed to macrocyclization. The enzyme rebinds the 25 amino-acid peptide in a different conformation and catalyzes macrocyclization of the N-terminal eight residues. The polypeptide is Dual function macrocyclase-peptidase POPB (Galerina marginata (strain CBS 339.88)).